Reading from the N-terminus, the 388-residue chain is UDP-galactose transporter senju (388 aa).

A run of 10 helical transmembrane segments spans residues 13–33, 46–66, 84–104, 113–133, 142–162, 202–222, 236–256, 276–296, 309–329, and 331–351; these read LTFV…IFVT, TVTV…CLYC, VLGL…LAFV, TYYL…QIIF, WISL…FGSF, FSLS…AGVY, IFVQ…VILL, FSVL…SFFL, ALEL…PIYM, and TALA…SPVV.

It belongs to the nucleotide-sugar transporter family.

It localises to the golgi apparatus membrane. Functionally, UDP-galactose transporter involved in the synthesis of galactose-containing glycans. Plays a role in quiescence of the innate immune response, possibly by regulating glycosylation of the Toll pathway ligand spz. In Drosophila melanogaster (Fruit fly), this protein is UDP-galactose transporter senju.